The chain runs to 510 residues: Nucleosome assembly protein 1-like 3 (510 aa).

Disordered regions lie at residues 1–99 (MAEA…LGTN) and 161–311 (PTEE…KRED). Positions 35–74 (SSSSSSSTSGSSSSSSTSGSSSSSGSGSSSSSSGSGSTSS) are enriched in low complexity. The segment covering 161-182 (PTEEECEWNSEDEEFSSDEEVQ) has biased composition (acidic residues). Basic and acidic residues-rich tracts occupy residues 200–229 (PKEN…EVPK), 235–246 (KAEEKADSKDCM), and 254–300 (EDPK…VDLK).

Belongs to the nucleosome assembly protein (NAP) family.

The protein resides in the nucleus. This is Nucleosome assembly protein 1-like 3 (NAP1L3) from Pongo abelii (Sumatran orangutan).